The following is a 1849-amino-acid chain: NADH-ubiquinone oxidoreductase chain 5 (1849 aa).

41 consecutive transmembrane segments (helical) span residues Tyr76–Tyr93, Leu98–Tyr120, Tyr190–Trp212, Leu222–Tyr244, His279–Ser301, Leu316–Tyr338, Leu358–Val380, Val390–Ile412, Ile419–Leu441, Leu483–Val505, Leu510–Val532, Ile536–Ile558, Leu565–Ile587, Ile621–Val640, Trp683–Phe705, Leu718–Leu740, Ile745–Leu767, Pro797–Val819, Ile868–Leu890, Leu905–Leu927, Leu966–Glu988, Pro1008–Leu1030, Leu1073–Phe1095, Leu1105–Leu1127, Thr1172–Ile1194, Val1219–His1241, Gly1248–Tyr1270, Ile1296–Leu1318, Phe1330–Tyr1352, Met1357–Ile1379, Leu1418–Thr1440, Val1444–Leu1466, Ala1478–Leu1500, Val1504–Thr1526, Lys1533–Phe1555, Leu1559–His1581, Ile1602–Ala1624, Val1639–Ile1661, Leu1719–Gly1741, Val1773–Asn1795, and Ile1802–Leu1824.

This sequence belongs to the complex I subunit 5 family.

The protein localises to the hydrogenosome membrane. It carries out the reaction a ubiquinone + NADH + 5 H(+)(in) = a ubiquinol + NAD(+) + 4 H(+)(out). This is NADH-ubiquinone oxidoreductase chain 5 (nad5) from Nyctotherus ovalis.